Reading from the N-terminus, the 648-residue chain is 5-aminolevulinate synthase, mitochondrial (648 aa).

The N-terminal 26 residues, 1 to 26 (MEALLQQSRAMCPFLKRSSPNTLRSL), are a transit peptide targeting the mitochondrion. Residues 69-109 (KRFTSSAAGVPGAGAGTPKPTRGSPGKRALHSTGGNGANMS) form a disordered region. Positions 170, 283, and 302 each coordinate substrate. 3 residues coordinate pyridoxal 5'-phosphate: S335, H363, and T409. K412 is a catalytic residue. Position 412 is an N6-(pyridoxal phosphate)lysine (K412). Pyridoxal 5'-phosphate is bound by residues T441 and T442. T527 contributes to the substrate binding site.

Belongs to the class-II pyridoxal-phosphate-dependent aminotransferase family. In terms of assembly, homodimer. Requires pyridoxal 5'-phosphate as cofactor.

Its subcellular location is the mitochondrion matrix. The catalysed reaction is succinyl-CoA + glycine + H(+) = 5-aminolevulinate + CO2 + CoA. It participates in porphyrin-containing compound metabolism; protoporphyrin-IX biosynthesis; 5-aminolevulinate from glycine: step 1/1. Its function is as follows. Catalyzes the synthesis of 5-aminolevulinate (ALA) from succinyl-CoA and glycine, the first and rate-limiting step in heme biosynthesis. This Emericella nidulans (strain FGSC A4 / ATCC 38163 / CBS 112.46 / NRRL 194 / M139) (Aspergillus nidulans) protein is 5-aminolevulinate synthase, mitochondrial (hemA).